The sequence spans 2103 residues: uncharacterized protein (2103 aa).

A compositionally biased stretch (low complexity) spans 1–12 (MSVPGTPGAMEP). The disordered stretch occupies residues 1 to 61 (MSVPGTPGAM…DADDQEEEME (61 aa)). The segment covering 51 to 61 (EDADDQEEEME) has biased composition (acidic residues). A Bromo domain is found at 77–196 (YELQQGYRIL…MMLEQKLALL (120 aa)). Disordered regions lie at residues 730–750 (AKHK…ITKK), 853–881 (NREL…SIDS), 933–956 (QSKQ…AKLS), 1224–1244 (SASP…TLNG), and 1770–1817 (GATR…STSP). Basic and acidic residues predominate over residues 865–877 (DLGKDSPKGEISK). Over residues 1224–1234 (SASPTISSTGQ) the composition is skewed to polar residues. Low complexity predominate over residues 1235–1244 (PLSSTTTLNG). Positions 1773-1794 (RSVSISKRQSRTSLQFHSPGIS) are enriched in polar residues. Positions 1795–1808 (TTVPTNVNTNKPQT) are enriched in low complexity.

Its subcellular location is the nucleus. This is an uncharacterized protein from Homo sapiens (Human).